A 671-amino-acid chain; its full sequence is Bifunctional acetylxylan esterase/xylanase XynS20E (671 aa).

An N-terminal signal peptide occupies residues 1–19 (MRLGVALSTIAVLLTATSA). The tract at residues 54–279 (QGAGRDIHVY…IQDIWDFVSQ (226 aa)) is acetylxylan esterase. Catalysis depends on serine 152, which acts as the Charge relay system. N-linked (GlcNAc...) asparagine glycosylation occurs at asparagine 238. A disordered region spans residues 285–328 (PVSASGNGGGNTTPTNPSTGGNGNGNGGGNTTPTNPSTGGNGNG). Gly residues predominate over residues 304-314 (GGNGNGNGGGN). CBM10 domains follow at residues 335-374 (KCSSNITKQGYKCCASNCEVVYTDSDGDWGVENDQWCGCG) and 383-422 (TCSAKILQQGYKCCPSGCIIYYTDEDGTWGVNGEEWCGCG). Asparagine 339 carries N-linked (GlcNAc...) asparagine glycosylation. N-linked (GlcNAc...) asparagine glycans are attached at residues asparagine 445 and asparagine 483. One can recognise a GH11 domain in the interval 461 to 661 (TVTSNKVGDI…NNGGTSGTAD (201 aa)). Catalysis depends on glutamate 555, which acts as the Nucleophile. The active-site Proton donor is glutamate 648.

The protein in the N-terminal section; belongs to the axeA family. In the C-terminal section; belongs to the glycosyl hydrolase 11 (cellulase G) family.

It localises to the secreted. The catalysed reaction is Deacetylation of xylans and xylo-oligosaccharides.. It catalyses the reaction Endohydrolysis of (1-&gt;4)-beta-D-xylosidic linkages in xylans.. Its pathway is glycan degradation; xylan degradation. Its function is as follows. Bifunctional acetylxylan esterase/xylanase involved in the hydrolysis of xylan, a major structural heterogeneous polysaccharide found in plant biomass representing the second most abundant polysaccharide in the biosphere, after cellulose. Degrades xylan from acetylxylan, beechwood, birchwood, and oat spelt, and releases acetate from 4-methylumbelliferyl acetate and beta-D-xylose tetraacetate. No activity is observed against carboxy methyl cellulose, beta-glucan, p-nitrophenol acetate, p-nitrophenol laurate, p-nitrophenol myristate, p-nitrophenol, palmitate, or beta-naphthol acetate. In Neocallimastix patriciarum (Rumen fungus), this protein is Bifunctional acetylxylan esterase/xylanase XynS20E (xynS20E).